The following is a 922-amino-acid chain: ATP-dependent helicase fft3 (922 aa).

Disordered regions lie at residues 139-177 (EPKMPSYMDDEEASDSLPLSLSSQSLSSQVTNQKPAPHR) and 198-224 (PLSSRKTYEPEADDDSNDDMYSDDDSN). Residues 153–166 (DSLPLSLSSQSLSS) show a composition bias toward low complexity. Residues 207–223 (PEADDDSNDDMYSDDDS) are compositionally biased toward acidic residues. 2 positions are modified to phosphoserine: Ser-213 and Ser-219. One can recognise a Helicase ATP-binding domain in the interval 399-567 (YLLYELKLAG…ISLLAFILPH (169 aa)). Residue 412-419 (DEMGLGKT) participates in ATP binding. Residues 518–521 (DEGH) carry the DEGH box motif. Ser-617 carries the phosphoserine modification. One can recognise a Helicase C-terminal domain in the interval 765 to 922 (KLKKLLTNAV…ETVEAEDDDD (158 aa)).

The protein belongs to the SNF2/RAD54 helicase family. In terms of assembly, interacts with the GDP-bound form of spi1.

The protein localises to the nucleus. It is found in the chromosome. The enzyme catalyses ATP + H2O = ADP + phosphate + H(+). Its function is as follows. DNA helicase that possesses intrinsic ATP-dependent nucleosome-remodeling activity and is required for heterochromatin organization. Required for maintaining a heterochromatin chromatin structure at centromeres and subtelomeres by protecting these regions from euchromatin assembly. Enhances the nucleotide exchange activity of the pim1 guanine nucleotide exchange factor and abolishes histone-H3-mediated RanGAP inhibition. Involved in the construction of the centromeres. In Schizosaccharomyces pombe (strain 972 / ATCC 24843) (Fission yeast), this protein is ATP-dependent helicase fft3 (fft3).